The chain runs to 493 residues: Mitochondrial distribution and morphology protein 10 (493 aa).

Belongs to the MDM10 family. In terms of assembly, component of the ER-mitochondria encounter structure (ERMES) or MDM complex, composed of MMM1, MDM10, MDM12 and MDM34. Associates with the mitochondrial outer membrane sorting assembly machinery SAM(core) complex, which consists of SAM35, SAM37 and SAM50, to form a SAM(holo) complex.

It is found in the mitochondrion outer membrane. Functionally, component of the ERMES/MDM complex, which serves as a molecular tether to connect the endoplasmic reticulum and mitochondria. Components of this complex are involved in the control of mitochondrial shape and protein biogenesis and may function in phospholipid exchange. MDM10 is involved in the late assembly steps of the general translocase of the mitochondrial outer membrane (TOM complex). Functions in the TOM40-specific route of the assembly of outer membrane beta-barrel proteins, including the association of TOM40 with the receptor TOM22 and small TOM proteins. Can associate with the SAM(core) complex as well as the MDM12-MMM1 complex, both involved in late steps of the major beta-barrel assembly pathway, that is responsible for biogenesis of all outer membrane beta-barrel proteins. May act as a switch that shuttles between both complexes and channels precursor proteins into the TOM40-specific pathway. Plays a role in mitochondrial morphology and in the inheritance of mitochondria. In Saccharomyces cerevisiae (strain YJM789) (Baker's yeast), this protein is Mitochondrial distribution and morphology protein 10.